The following is a 143-amino-acid chain: uncharacterized protein (143 aa).

Residues 1–38 (MKYWKYLSQLTIRRPLTYNNALLYRNRFPSILTWKRSA) constitute a mitochondrion transit peptide.

The protein localises to the mitochondrion. This is an uncharacterized protein from Schizosaccharomyces pombe (strain 972 / ATCC 24843) (Fission yeast).